Reading from the N-terminus, the 473-residue chain is Ribulose bisphosphate carboxylase large chain (473 aa).

2 residues coordinate substrate: Asn116 and Thr166. Lys168 functions as the Proton acceptor in the catalytic mechanism. Lys170 contributes to the substrate binding site. 3 residues coordinate Mg(2+): Lys194, Asp196, and Glu197. Lys194 carries the post-translational modification N6-carboxylysine. Residue His287 is the Proton acceptor of the active site. Substrate is bound by residues Arg288, His320, and Ser372.

It belongs to the RuBisCO large chain family. Type I subfamily. As to quaternary structure, heterohexadecamer of 8 large chains and 8 small chains. Requires Mg(2+) as cofactor.

The enzyme catalyses 2 (2R)-3-phosphoglycerate + 2 H(+) = D-ribulose 1,5-bisphosphate + CO2 + H2O. It catalyses the reaction D-ribulose 1,5-bisphosphate + O2 = 2-phosphoglycolate + (2R)-3-phosphoglycerate + 2 H(+). In terms of biological role, ruBisCO catalyzes two reactions: the carboxylation of D-ribulose 1,5-bisphosphate, the primary event in carbon dioxide fixation, as well as the oxidative fragmentation of the pentose substrate. Both reactions occur simultaneously and in competition at the same active site. This chain is Ribulose bisphosphate carboxylase large chain, found in Nitrosomonas sp. (strain ENI-11).